A 502-amino-acid chain; its full sequence is Putative F-box/FBD/LRR-repeat protein At5g22610 (502 aa).

The F-box domain maps to 17-63 (EDLISKLPEVLLSQILSYLPTKDIVRTSVLSKRWKSVWLLIPGLDLD). LRR repeat units follow at residues 70–98 (YDTF…KLSI), 99–127 (QKNE…DVEF), 147–180 (CKTL…CLEE), 181–206 (NVYS…TIVK), 208–228 (DDNV…SVGY), 238–263 (YYYD…TFNN), and 344–373 (SVWL…VLET). The region spanning 384 to 435 (VERRVSSVPECLLSSLEFVEIKNRISVDDGALEVARYFVENSVNLQKVVLRL) is the FBD domain.

The polypeptide is Putative F-box/FBD/LRR-repeat protein At5g22610 (Arabidopsis thaliana (Mouse-ear cress)).